The primary structure comprises 170 residues: Transcriptional repressor NrdR (170 aa).

The segment at 3–34 is a zinc-finger region; sequence CPFCRHPDSRVVDSRVTDDGTAIRRRRSCPEC. An ATP-cone domain is found at 46-136; that stretch reads LSVIKRSGVI…VYRGFESLED (91 aa). Positions 151–170 are disordered; the sequence is ERSETVERGRPVPSRGVDDR.

Belongs to the NrdR family. Zn(2+) is required as a cofactor.

Its function is as follows. Negatively regulates transcription of bacterial ribonucleotide reductase nrd genes and operons by binding to NrdR-boxes. In Acidothermus cellulolyticus (strain ATCC 43068 / DSM 8971 / 11B), this protein is Transcriptional repressor NrdR.